The chain runs to 607 residues: Dolichyl-diphosphooligosaccharide--protein glycosyltransferase subunit 1 (607 aa).

The first 23 residues, M1–S23, serve as a signal peptide directing secretion. Residues A24–L434 lie on the Lumenal side of the membrane. K187 carries the N6-acetyllysine modification. N-linked (GlcNAc...) asparagine glycosylation occurs at N299. Residues M435–I455 form a helical membrane-spanning segment. The Cytoplasmic portion of the chain corresponds to Y456–L607. The residue at position 538 (K538) is an N6-acetyllysine; alternate. Residue K538 forms a Glycyl lysine isopeptide (Lys-Gly) (interchain with G-Cter in SUMO2); alternate linkage.

It belongs to the OST1 family. As to quaternary structure, component of the oligosaccharyltransferase (OST) complex. OST exists in two different complex forms which contain common core subunits RPN1, RPN2, OST48, OST4, DAD1 and TMEM258, either STT3A or STT3B as catalytic subunits, and form-specific accessory subunits. STT3A complex assembly occurs through the formation of 3 subcomplexes. Subcomplex 1 contains RPN1 and TMEM258, subcomplex 2 contains the STT3A-specific subunits STT3A, DC2/OSTC, and KCP2 as well as the core subunit OST4, and subcomplex 3 contains RPN2, DAD1, and OST48. The STT3A complex can form stable complexes with the Sec61 complex or with both the Sec61 and TRAP complexes. Interacts with TMEM35A/NACHO. In terms of processing, ubiquitinated by the ECS(ASB11) complex. Post-translationally, ufmylated by UFL1 in response to endoplasmic reticulum stress, promoting reticulophagy of endoplasmic reticulum sheets.

It is found in the endoplasmic reticulum membrane. Its pathway is protein modification; protein glycosylation. Its function is as follows. Subunit of the oligosaccharyl transferase (OST) complex that catalyzes the initial transfer of a defined glycan (Glc(3)Man(9)GlcNAc(2) in eukaryotes) from the lipid carrier dolichol-pyrophosphate to an asparagine residue within an Asn-X-Ser/Thr consensus motif in nascent polypeptide chains, the first step in protein N-glycosylation. N-glycosylation occurs cotranslationally and the complex associates with the Sec61 complex at the channel-forming translocon complex that mediates protein translocation across the endoplasmic reticulum (ER). All subunits are required for a maximal enzyme activity. This Pongo abelii (Sumatran orangutan) protein is Dolichyl-diphosphooligosaccharide--protein glycosyltransferase subunit 1.